The chain runs to 104 residues: AVIToxin-VAR1 (104 aa).

An N-terminal signal peptide occupies residues 1–19 (MRSLLCAPLLLLLLSAGES). 5 cysteine pairs are disulfide-bonded: Cys-26/Cys-38, Cys-32/Cys-50, Cys-37/Cys-78, Cys-60/Cys-86, and Cys-80/Cys-96.

The protein belongs to the AVIT (prokineticin) family. As to expression, expressed by the venom gland.

The protein localises to the secreted. In terms of biological role, potent agonist for both PKR1/PROKR1 and PKR2/PROKR2. Potently contracts gastrointestinal (GI) smooth muscle. In Varanus varius (Lace monitor lizard), this protein is AVIToxin-VAR1.